The chain runs to 486 residues: UDP-N-acetylmuramoyl-L-alanyl-D-glutamate--2,6-diaminopimelate ligase (486 aa).

Ser-30 contacts UDP-N-acetyl-alpha-D-muramoyl-L-alanyl-D-glutamate. 112 to 118 (GTNGKTT) contacts ATP. Residues 154-155 (TT), Ser-181, Gln-187, and Arg-189 contribute to the UDP-N-acetyl-alpha-D-muramoyl-L-alanyl-D-glutamate site. Lys-221 is modified (N6-carboxylysine). Meso-2,6-diaminopimelate is bound by residues Arg-378, 402 to 405 (DNPR), Gly-455, and Glu-459. The short motif at 402-405 (DNPR) is the Meso-diaminopimelate recognition motif element.

This sequence belongs to the MurCDEF family. MurE subfamily. The cofactor is Mg(2+). Post-translationally, carboxylation is probably crucial for Mg(2+) binding and, consequently, for the gamma-phosphate positioning of ATP.

It localises to the cytoplasm. The catalysed reaction is UDP-N-acetyl-alpha-D-muramoyl-L-alanyl-D-glutamate + meso-2,6-diaminopimelate + ATP = UDP-N-acetyl-alpha-D-muramoyl-L-alanyl-gamma-D-glutamyl-meso-2,6-diaminopimelate + ADP + phosphate + H(+). It participates in cell wall biogenesis; peptidoglycan biosynthesis. Catalyzes the addition of meso-diaminopimelic acid to the nucleotide precursor UDP-N-acetylmuramoyl-L-alanyl-D-glutamate (UMAG) in the biosynthesis of bacterial cell-wall peptidoglycan. The protein is UDP-N-acetylmuramoyl-L-alanyl-D-glutamate--2,6-diaminopimelate ligase of Cytophaga hutchinsonii (strain ATCC 33406 / DSM 1761 / CIP 103989 / NBRC 15051 / NCIMB 9469 / D465).